A 361-amino-acid chain; its full sequence is tRNA/tmRNA (uracil-C(5))-methyltransferase (361 aa).

Positions 185, 213, 218, 234, and 294 each coordinate S-adenosyl-L-methionine. Cysteine 319 acts as the Nucleophile in catalysis. Catalysis depends on glutamate 353, which acts as the Proton acceptor.

Belongs to the class I-like SAM-binding methyltransferase superfamily. RNA M5U methyltransferase family. TrmA subfamily.

The catalysed reaction is uridine(54) in tRNA + S-adenosyl-L-methionine = 5-methyluridine(54) in tRNA + S-adenosyl-L-homocysteine + H(+). The enzyme catalyses uridine(341) in tmRNA + S-adenosyl-L-methionine = 5-methyluridine(341) in tmRNA + S-adenosyl-L-homocysteine + H(+). Its function is as follows. Dual-specificity methyltransferase that catalyzes the formation of 5-methyluridine at position 54 (m5U54) in all tRNAs, and that of position 341 (m5U341) in tmRNA (transfer-mRNA). The chain is tRNA/tmRNA (uracil-C(5))-methyltransferase from Pseudomonas putida (strain W619).